A 260-amino-acid polypeptide reads, in one-letter code: Segregation and condensation protein A (260 aa).

It belongs to the ScpA family. As to quaternary structure, component of a cohesin-like complex composed of ScpA, ScpB and the Smc homodimer, in which ScpA and ScpB bind to the head domain of Smc. The presence of the three proteins is required for the association of the complex with DNA.

The protein localises to the cytoplasm. In terms of biological role, participates in chromosomal partition during cell division. May act via the formation of a condensin-like complex containing Smc and ScpB that pull DNA away from mid-cell into both cell halves. This chain is Segregation and condensation protein A, found in Halalkalibacterium halodurans (strain ATCC BAA-125 / DSM 18197 / FERM 7344 / JCM 9153 / C-125) (Bacillus halodurans).